A 37-amino-acid chain; its full sequence is Cytochrome b6-f complex subunit 5 (37 aa).

A helical membrane pass occupies residues 5-25 (LLSGIVLGMIPVTLAGLFVTA).

It belongs to the PetG family. The 4 large subunits of the cytochrome b6-f complex are cytochrome b6, subunit IV (17 kDa polypeptide, PetD), cytochrome f and the Rieske protein, while the 4 small subunits are PetG, PetL, PetM and PetN. The complex functions as a dimer.

It is found in the plastid. The protein resides in the chloroplast thylakoid membrane. Its function is as follows. Component of the cytochrome b6-f complex, which mediates electron transfer between photosystem II (PSII) and photosystem I (PSI), cyclic electron flow around PSI, and state transitions. PetG is required for either the stability or assembly of the cytochrome b6-f complex. The sequence is that of Cytochrome b6-f complex subunit 5 from Staurastrum punctulatum (Green alga).